Consider the following 754-residue polypeptide: Condensin complex subunit 2 (754 aa).

Residues 104 to 149 (LAQRKTNGASNGDDSNGGNGEGLGGDSDEANIEIDPLTGMPISNDP) form a disordered region. Gly residues predominate over residues 118–128 (SNGGNGEGLGG). Position 245 is a phosphoserine (S245). Residues 359-379 (CYPDENHDNTSHDEQDDDNVN) form a disordered region. A compositionally biased stretch (basic and acidic residues) spans 362–371 (DENHDNTSHD). At S548 the chain carries Phosphoserine. The interval 665-688 (HDSRKNREQSSNDSETHTEDESTK) is disordered.

The protein belongs to the CND2 (condensin subunit 2) family. Component of the condensin complex, which contains the SMC2 and SMC4 heterodimer, and three non SMC subunits that probably regulate the complex: BRN1, YCS4 and YCG1/YCS5.

Its subcellular location is the nucleus. The protein localises to the cytoplasm. It is found in the chromosome. Regulatory subunit of the condensin complex, a complex required for conversion of interphase chromatin into mitotic-like condense chromosomes. The condensin complex probably introduces positive supercoils into relaxed DNA in the presence of type I topoisomerases and converts nicked DNA into positive knotted forms in the presence of type II topoisomerases. The condensin complex probably also plays a role during interphase. The chain is Condensin complex subunit 2 (BRN1) from Saccharomyces cerevisiae (strain ATCC 204508 / S288c) (Baker's yeast).